Reading from the N-terminus, the 536-residue chain is Subtilisin-like proteinase Spm1 (536 aa).

An N-terminal signal peptide occupies residues 1-15 (MKSVILLSLAACAVA). A propeptide spanning residues 16-147 (APTAGVETIH…RYEEVKKDEC (132 aa)) is cleaved from the precursor. Residues 44 to 137 (YIIKFKKHVD…IERDTIVHTM (94 aa)) enclose the Inhibitor I9 domain. A Peptidase S8 domain is found at 156 to 462 (PWGLSRVSHR…GGCSNYFEIV (307 aa)). Residues Asp-192 and His-224 each act as charge relay system in the active site. Asn-254 and Asn-294 each carry an N-linked (GlcNAc...) asparagine glycan. Ser-390 serves as the catalytic Charge relay system.

It belongs to the peptidase S8 family.

The protein resides in the vacuole. In Pyricularia oryzae (strain 70-15 / ATCC MYA-4617 / FGSC 8958) (Rice blast fungus), this protein is Subtilisin-like proteinase Spm1 (SPM1).